The sequence spans 733 residues: Cell division cycle protein 48 homolog AF_1297 (733 aa).

ATP contacts are provided by residues 223 to 230 (GPPGTGKT) and 496 to 503 (GPPGTGKT).

Belongs to the AAA ATPase family. CDC48 subfamily.

This is Cell division cycle protein 48 homolog AF_1297 from Archaeoglobus fulgidus (strain ATCC 49558 / DSM 4304 / JCM 9628 / NBRC 100126 / VC-16).